A 386-amino-acid polypeptide reads, in one-letter code: Chaperone protein DnaJ (386 aa).

Positions 3–68 (DYYEILEVAR…KKRQVYDRYG (66 aa)) constitute a J domain. The segment at 146-224 (GVDKELVISN…CKGQGAVKEK (79 aa)) adopts a CR-type zinc-finger fold. Cys-159, Cys-162, Cys-176, Cys-179, Cys-198, Cys-201, Cys-212, and Cys-215 together coordinate Zn(2+). CXXCXGXG motif repeat units follow at residues 159–166 (CNVCNGKG), 176–183 (CSECKGRG), 198–205 (CPKCHGEG), and 212–219 (CKNCKGQG).

It belongs to the DnaJ family. In terms of assembly, homodimer. Zn(2+) serves as cofactor.

It localises to the cytoplasm. Its function is as follows. Participates actively in the response to hyperosmotic and heat shock by preventing the aggregation of stress-denatured proteins and by disaggregating proteins, also in an autonomous, DnaK-independent fashion. Unfolded proteins bind initially to DnaJ; upon interaction with the DnaJ-bound protein, DnaK hydrolyzes its bound ATP, resulting in the formation of a stable complex. GrpE releases ADP from DnaK; ATP binding to DnaK triggers the release of the substrate protein, thus completing the reaction cycle. Several rounds of ATP-dependent interactions between DnaJ, DnaK and GrpE are required for fully efficient folding. Also involved, together with DnaK and GrpE, in the DNA replication of plasmids through activation of initiation proteins. This is Chaperone protein DnaJ from Protochlamydia amoebophila (strain UWE25).